The chain runs to 99 residues: Large ribosomal subunit protein bL21 (99 aa).

It belongs to the bacterial ribosomal protein bL21 family. In terms of assembly, part of the 50S ribosomal subunit. Contacts protein L20.

This protein binds to 23S rRNA in the presence of protein L20. The sequence is that of Large ribosomal subunit protein bL21 from Neorickettsia sennetsu (strain ATCC VR-367 / Miyayama) (Ehrlichia sennetsu).